A 5381-amino-acid chain; its full sequence is Protein purity of essence (5381 aa).

Disordered stretches follow at residues 140 to 174 (KHPESSNKSIMSMAGSTTGGAGAGGSNDKESPKLE), 339 to 364 (QQQTAAAASTSQGSGGGLSSVQTSKD), 599 to 621 (SPETHDDNANTSSQERSGEQKSA), 683 to 709 (RNDSEQQSPPSTAAAVAAATGAGSSGS), 1162 to 1212 (SGGD…STET), and 1632 to 1659 (QAAQPNPSEESSQACDHSEGGEQRQSER). The segment covering 339–350 (QQQTAAAASTSQ) has biased composition (low complexity). Low complexity-rich tracts occupy residues 690 to 709 (SPPSTAAAVAAATGAGSSGS) and 1167 to 1176 (SSCTSAASSS). A compositionally biased stretch (polar residues) spans 1632–1646 (QAAQPNPSEESSQAC). Residues 1647–1658 (DHSEGGEQRQSE) show a composition bias toward basic and acidic residues. The segment at 1815 to 1884 (KLCTFSQTQK…EDGSCQALSR (70 aa)) adopts a UBR-type zinc-finger fold. Disordered regions lie at residues 1917–1939 (KRSNTAPGATQQQHGAPARKDSI), 2443–2479 (KNTTNNPQGKSKGGGSAAAGKLLHRKASSQQHQKQLT), 2632–2652 (PDDSEDVPAPSSGPTPVTATQ), 3037–3143 (VSAG…DNNE), 3537–3562 (KQQQQQQQPPPAVVSASSKLRSDREK), and 4247–4280 (HHQQDAPAGTKPKSSKQQQSAGTETPPRKSKEAA). Polar residues-rich tracts occupy residues 1920–1930 (NTAPGATQQQH), 2470–2479 (SSQQHQKQLT), 2643–2652 (SGPTPVTATQ), and 3048–3058 (NVATDGSTLRT). A compositionally biased stretch (gly residues) spans 3065–3075 (GSGGSESGGSG). The span at 3084 to 3104 (ARSSNFGDHPNTTPPRQSCSS) shows a compositional bias: polar residues. Positions 3119–3132 (SGSGGSASVPGGGL) are enriched in gly residues. The tract at residues 4904 to 5374 (PSLKYILRFL…SFIEDLLASL (471 aa)) is UBR4 E3 catalytic module. The HemiRING-type zinc-finger motif lies at 5022–5136 (GLTCFICREG…SSYMQESTQR (115 aa)). Zn(2+) contacts are provided by Cys-5025, Cys-5028, His-5074, and Cys-5077. Residues 5139–5374 (ISYTSSIHDL…SFIEDLLASL (236 aa)) form the UZI domain.

This sequence belongs to the UBR4 family.

In terms of biological role, has a role in growth of the perineurial glial layer of the larval peripheral nerve. May have a role in male fertility and eye development or function. May bind calmodulin. This is Protein purity of essence from Drosophila pseudoobscura pseudoobscura (Fruit fly).